The sequence spans 353 residues: MTTDTPPPKPGLTYAEAGVDIDAGNTLVDRIKPAAKATSRPGVMSGLGGFGALFDLRAAGYADPVLVAATDGVGTKLRIAIDTGHVDTIGIDLVAMCVNDLVCQGAEPLLFLDYFATGKLDVAEAATIVEGIARGCATSGCALIGGETAEMPGMYAKGDFDLAGFAVGAMERGGALPANVAAGDMILGLASDGVHSNGYSLVRRIVERSGLGWGDPAPFEGRTLGAALLTPTRLYVQPALAAIRAGGVHGLAHVTGGGLTENLPRVLPEGLGIEINLGAWELPPVFRWLAAEGGLDEAELLKTFNAGIGMALIVAPDRAEALADLLAGAGERVAVIGHVTEGAGAVHYRGTLL.

The protein belongs to the AIR synthase family.

It localises to the cytoplasm. The enzyme catalyses 2-formamido-N(1)-(5-O-phospho-beta-D-ribosyl)acetamidine + ATP = 5-amino-1-(5-phospho-beta-D-ribosyl)imidazole + ADP + phosphate + H(+). Its pathway is purine metabolism; IMP biosynthesis via de novo pathway; 5-amino-1-(5-phospho-D-ribosyl)imidazole from N(2)-formyl-N(1)-(5-phospho-D-ribosyl)glycinamide: step 2/2. The polypeptide is Phosphoribosylformylglycinamidine cyclo-ligase (Dinoroseobacter shibae (strain DSM 16493 / NCIMB 14021 / DFL 12)).